The following is a 232-amino-acid chain: Cytidylate kinase (232 aa).

19–27 contributes to the ATP binding site; sequence GPAGVGKTT.

The protein belongs to the cytidylate kinase family. Type 1 subfamily.

It is found in the cytoplasm. It catalyses the reaction CMP + ATP = CDP + ADP. The catalysed reaction is dCMP + ATP = dCDP + ADP. The sequence is that of Cytidylate kinase from Nitratidesulfovibrio vulgaris (strain ATCC 29579 / DSM 644 / CCUG 34227 / NCIMB 8303 / VKM B-1760 / Hildenborough) (Desulfovibrio vulgaris).